Here is a 459-residue protein sequence, read N- to C-terminus: GTPase Der (459 aa).

EngA-type G domains follow at residues 4–169 (PLVA…PEVA) and 179–355 (IAVA…AAHR). GTP-binding positions include 10 to 17 (GRPNVGKS), 57 to 61 (DTGGL), 120 to 123 (NKCE), 185 to 192 (GRPNVGKS), 232 to 236 (DTAGI), and 297 to 300 (NKWD). The 86-residue stretch at 356–441 (KRIATSVVNE…PIRFRWRSKS (86 aa)) folds into the KH-like domain.

The protein belongs to the TRAFAC class TrmE-Era-EngA-EngB-Septin-like GTPase superfamily. EngA (Der) GTPase family. Associates with the 50S ribosomal subunit.

In terms of biological role, GTPase that plays an essential role in the late steps of ribosome biogenesis. The protein is GTPase Der of Synechococcus sp. (strain JA-3-3Ab) (Cyanobacteria bacterium Yellowstone A-Prime).